The primary structure comprises 502 residues: Glycerol kinase (502 aa).

Position 14 (Thr-14) interacts with ADP. Residues Thr-14, Thr-15, and Ser-16 each coordinate ATP. A sn-glycerol 3-phosphate-binding site is contributed by Thr-14. Arg-18 contributes to the ADP binding site. Positions 84, 85, 136, and 246 each coordinate sn-glycerol 3-phosphate. Glycerol-binding residues include Arg-84, Glu-85, Tyr-136, Asp-246, and Gln-247. 2 residues coordinate ADP: Thr-268 and Gly-311. Thr-268, Gly-311, Gln-315, and Gly-412 together coordinate ATP. ADP is bound by residues Gly-412 and Asn-416.

The protein belongs to the FGGY kinase family. As to quaternary structure, homotetramer and homodimer (in equilibrium). Heterodimer with EIIA-Glc. Binds 1 zinc ion per glycerol kinase EIIA-Glc dimer. The zinc ion is important for dimerization.

It carries out the reaction glycerol + ATP = sn-glycerol 3-phosphate + ADP + H(+). Its pathway is polyol metabolism; glycerol degradation via glycerol kinase pathway; sn-glycerol 3-phosphate from glycerol: step 1/1. Activity of this regulatory enzyme is affected by several metabolites. Allosterically and non-competitively inhibited by fructose 1,6-bisphosphate (FBP) and unphosphorylated phosphocarrier protein EIIA-Glc (III-Glc), an integral component of the bacterial phosphotransferase (PTS) system. Functionally, key enzyme in the regulation of glycerol uptake and metabolism. Catalyzes the phosphorylation of glycerol to yield sn-glycerol 3-phosphate. The chain is Glycerol kinase from Escherichia coli (strain ATCC 8739 / DSM 1576 / NBRC 3972 / NCIMB 8545 / WDCM 00012 / Crooks).